The sequence spans 441 residues: Glutamate--tRNA ligase 2 (441 aa).

Residues 6–16 (PSPTGDMHIGN) carry the 'HIGH' region motif. A 'KMSKS' region motif is present at residues 231–235 (KMSKR). Lys-234 is an ATP binding site.

This sequence belongs to the class-I aminoacyl-tRNA synthetase family. Glutamate--tRNA ligase type 1 subfamily. Monomer.

Its subcellular location is the cytoplasm. It catalyses the reaction tRNA(Glu) + L-glutamate + ATP = L-glutamyl-tRNA(Glu) + AMP + diphosphate. Its function is as follows. Catalyzes the attachment of glutamate to tRNA(Glu) in a two-step reaction: glutamate is first activated by ATP to form Glu-AMP and then transferred to the acceptor end of tRNA(Glu). The sequence is that of Glutamate--tRNA ligase 2 from Helicobacter hepaticus (strain ATCC 51449 / 3B1).